The primary structure comprises 300 residues: Non-secreted LysM effector LysM16 (300 aa).

One can recognise a LysM domain in the interval Glu-176–Val-222.

This sequence belongs to the secreted LysM effector family.

In terms of biological role, non-secreted LysM effector that might be involved in manipulation of host defenses for successful infection. The polypeptide is Non-secreted LysM effector LysM16 (Penicillium expansum (Blue mold rot fungus)).